Reading from the N-terminus, the 150-residue chain is MNRNTMDIYKILKQLPHRYPFLLVDRVLAIDKGKSIRAVKNVTINEPFFQGHFPYRPVMPGVLMLEALAQAAALLAFDAIDTTPDEDSVYYFAGMDGVRFKRPVEPGDQLILEVELVRMKAGIFKFKARALVDNELAVEAELTCAVRKIA.

Residue His-52 is part of the active site.

The protein belongs to the thioester dehydratase family. FabZ subfamily.

It is found in the cytoplasm. The catalysed reaction is a (3R)-hydroxyacyl-[ACP] = a (2E)-enoyl-[ACP] + H2O. Its function is as follows. Involved in unsaturated fatty acids biosynthesis. Catalyzes the dehydration of short chain beta-hydroxyacyl-ACPs and long chain saturated and unsaturated beta-hydroxyacyl-ACPs. This is 3-hydroxyacyl-[acyl-carrier-protein] dehydratase FabZ from Albidiferax ferrireducens (strain ATCC BAA-621 / DSM 15236 / T118) (Rhodoferax ferrireducens).